We begin with the raw amino-acid sequence, 76 residues long: Protein CASC2, isoforms 1/2 (76 aa).

Positions 1–20 are disordered; that stretch reads MAGTRGLMLLGPGPVAGPRD.

In Homo sapiens (Human), this protein is Protein CASC2, isoforms 1/2 (CASC2).